Reading from the N-terminus, the 122-residue chain is Large ribosomal subunit protein uL14 (122 aa).

Belongs to the universal ribosomal protein uL14 family. As to quaternary structure, part of the 50S ribosomal subunit. Forms a cluster with proteins L3 and L19. In the 70S ribosome, L14 and L19 interact and together make contacts with the 16S rRNA in bridges B5 and B8.

Its function is as follows. Binds to 23S rRNA. Forms part of two intersubunit bridges in the 70S ribosome. The protein is Large ribosomal subunit protein uL14 of Mycoplasma genitalium (strain ATCC 33530 / DSM 19775 / NCTC 10195 / G37) (Mycoplasmoides genitalium).